Here is a 136-residue protein sequence, read N- to C-terminus: Histone H3 (136 aa).

Residues 1 to 43 (MARTKQTARKSTGGKAPRKQLASKAARKSAPSTGGVKKPHRYK) form a disordered region. Lysine 5 bears the N6,N6,N6-trimethyllysine; alternate mark. N6,N6-dimethyllysine; alternate is present on lysine 5. Residues lysine 5 and lysine 10 each carry the N6-methyllysine; alternate modification. Lysine 10 bears the N6-acetyllysine; alternate mark. Position 11 is a phosphoserine (serine 11). Lysine 15 carries the N6,N6-dimethyllysine; alternate modification. Residues lysine 15, lysine 19, lysine 24, lysine 28, and lysine 37 each carry the N6-methyllysine; alternate modification. 5 positions are modified to N6-acetyllysine; alternate: lysine 15, lysine 19, lysine 24, lysine 28, and lysine 37. 2 positions are modified to N6,N6,N6-trimethyllysine; alternate: lysine 28 and lysine 37. 2 positions are modified to N6,N6-dimethyllysine; alternate: lysine 28 and lysine 37. An N6-acetyllysine mark is found at lysine 57 and lysine 65. N6,N6,N6-trimethyllysine; alternate is present on lysine 80. Residue lysine 80 is modified to N6,N6-dimethyllysine; alternate. Lysine 80 carries the N6-methyllysine; alternate modification.

This sequence belongs to the histone H3 family. In terms of assembly, the nucleosome is a histone octamer containing two molecules each of H2A, H2B, H3 and H4 assembled in one H3-H4 heterotetramer and two H2A-H2B heterodimers. The octamer wraps approximately 147 bp of DNA. Post-translationally, phosphorylated by IPL1 to form H3S10ph. H3S10ph promotes subsequent H3K14ac formation by GCN5 and is required for transcriptional activation through TBP recruitment to the promoters. In terms of processing, mono-, di- and trimethylated by the COMPASS complex to form H3K4me1/2/3. H3K4me activates gene expression by regulating transcription elongation and plays a role in telomere length maintenance. H3K4me enrichment correlates with transcription levels, and occurs in a 5' to 3' gradient with H3K4me3 enrichment at the 5'-end of genes, shifting to H3K4me2 and then H3K4me1. Methylated by SET2 to form H3K36me. H3K36me represses gene expression. Methylated by DOT1 to form H3K79me. H3K79me is required for association of SIR proteins with telomeric regions and for telomeric silencing. The COMPASS-mediated formation of H3K4me2/3 and the DOT1-mediated formation of H3K79me require H2BK123ub1. Acetylation of histone H3 leads to transcriptional activation. H3K14ac formation by GCN5 is promoted by H3S10ph. H3K14ac can also be formed by ESA1. H3K56ac formation occurs predominantly in newly synthesized H3 molecules during G1, S and G2/M of the cell cycle and may be involved in DNA repair.

The protein resides in the nucleus. It localises to the chromosome. Its function is as follows. Core component of nucleosome. Nucleosomes wrap and compact DNA into chromatin, limiting DNA accessibility to the cellular machineries which require DNA as a template. Histones thereby play a central role in transcription regulation, DNA repair, DNA replication and chromosomal stability. DNA accessibility is regulated via a complex set of post-translational modifications of histones, also called histone code, and nucleosome remodeling. The sequence is that of Histone H3 (HHT1) from Candida glabrata (strain ATCC 2001 / BCRC 20586 / JCM 3761 / NBRC 0622 / NRRL Y-65 / CBS 138) (Yeast).